The chain runs to 62 residues: Small ribosomal subunit protein eS17 (62 aa).

It belongs to the eukaryotic ribosomal protein eS17 family.

This is Small ribosomal subunit protein eS17 from Methanocaldococcus jannaschii (strain ATCC 43067 / DSM 2661 / JAL-1 / JCM 10045 / NBRC 100440) (Methanococcus jannaschii).